We begin with the raw amino-acid sequence, 222 residues long: UPF0758 protein TM_1557 (222 aa).

The region spanning 101–222 is the MPN domain; it reads KLDSSVKVYK…YFSFREEGEL (122 aa). Residues histidine 171, histidine 173, and aspartate 184 each coordinate Zn(2+). The JAMM motif motif lies at 171 to 184; it reads HNHPSGDPTPSKED.

This sequence belongs to the UPF0758 family.

In Thermotoga maritima (strain ATCC 43589 / DSM 3109 / JCM 10099 / NBRC 100826 / MSB8), this protein is UPF0758 protein TM_1557.